The sequence spans 156 residues: Transcription elongation factor GreA (156 aa).

A coiled-coil region spans residues 12–72 (YKKLEDELST…KEIEHELKYA (61 aa)).

Belongs to the GreA/GreB family.

Necessary for efficient RNA polymerase transcription elongation past template-encoded arresting sites. The arresting sites in DNA have the property of trapping a certain fraction of elongating RNA polymerases that pass through, resulting in locked ternary complexes. Cleavage of the nascent transcript by cleavage factors such as GreA or GreB allows the resumption of elongation from the new 3'terminus. GreA releases sequences of 2 to 3 nucleotides. The protein is Transcription elongation factor GreA of Dehalococcoides mccartyi (strain ATCC BAA-2266 / KCTC 15142 / 195) (Dehalococcoides ethenogenes (strain 195)).